The primary structure comprises 51 residues: Large ribosomal subunit protein eL39 (51 aa).

A compositionally biased stretch (basic residues) spans 1 to 15 (MPSHKSFRTKQKLAK). A disordered region spans residues 1-21 (MPSHKSFRTKQKLAKAARQNR).

This sequence belongs to the eukaryotic ribosomal protein eL39 family. Component of the large ribosomal subunit (LSU). Mature yeast ribosomes consist of a small (40S) and a large (60S) subunit. The 40S small subunit contains 1 molecule of ribosomal RNA (18S rRNA) and at least 33 different proteins. The large 60S subunit contains 3 rRNA molecules (25S, 5.8S and 5S rRNA) and at least 46 different proteins. eL39 interacts with yih1.

It is found in the cytoplasm. In terms of biological role, component of the ribosome, a large ribonucleoprotein complex responsible for the synthesis of proteins in the cell. The small ribosomal subunit (SSU) binds messenger RNAs (mRNAs) and translates the encoded message by selecting cognate aminoacyl-transfer RNA (tRNA) molecules. The large subunit (LSU) contains the ribosomal catalytic site termed the peptidyl transferase center (PTC), which catalyzes the formation of peptide bonds, thereby polymerizing the amino acids delivered by tRNAs into a polypeptide chain. The nascent polypeptides leave the ribosome through a tunnel in the LSU and interact with protein factors that function in enzymatic processing, targeting, and the membrane insertion of nascent chains at the exit of the ribosomal tunnel. This Schizosaccharomyces pombe (strain 972 / ATCC 24843) (Fission yeast) protein is Large ribosomal subunit protein eL39 (rpl39).